Consider the following 286-residue polypeptide: Probable ketoamine kinase EAE_16955 (286 aa).

An ATP-binding site is contributed by 92–94 (EYL). D194 (proton acceptor) is an active-site residue.

The protein belongs to the fructosamine kinase family.

Its function is as follows. Ketoamine kinase that phosphorylates ketoamines on the third carbon of the sugar moiety to generate ketoamine 3-phosphate. The sequence is that of Probable ketoamine kinase EAE_16955 from Klebsiella aerogenes (strain ATCC 13048 / DSM 30053 / CCUG 1429 / JCM 1235 / KCTC 2190 / NBRC 13534 / NCIMB 10102 / NCTC 10006 / CDC 819-56) (Enterobacter aerogenes).